Here is a 290-residue protein sequence, read N- to C-terminus: D-tagatose 3-epimerase (290 aa).

C66 contacts substrate. E152 functions as the Proton donor/acceptor in the catalytic mechanism. E152 provides a ligand contact to Mn(2+). Residues E158 and 185–188 (DTFH) contribute to the substrate site. Mn(2+) contacts are provided by D185 and H211. R217 is a binding site for substrate. E246 functions as the Proton donor/acceptor in the catalytic mechanism. E246 contributes to the Mn(2+) binding site.

This sequence belongs to the hyi family. In terms of assembly, homodimer. It depends on Mn(2+) as a cofactor.

It carries out the reaction keto-D-tagatose = keto-D-sorbose. The enzyme catalyses D-allulose = keto-D-fructose. The catalysed reaction is D-ribulose = D-xylulose. Its activity is regulated as follows. Strongly inhibited (about 90% of the enzyme activity) by Ag(+), Hg(2+) and p-chloromercuribenzoic acid. Cu(2+) and Zn(2+) inhibit about 60% of the enzyme activity. Catalyzes the epimerization of various ketoses at the C(3) position. It is able to interconvert D-tagatose and D-ribulose to D-sorbose and D-xylulose, respectively. The enzyme is also able to accept other ketopentoses such as D-psicose with lower efficiency. The polypeptide is D-tagatose 3-epimerase (Pseudomonas cichorii).